The primary structure comprises 652 residues: Set1 complex component ash2 (652 aa).

Residues 1–32 are disordered; that stretch reads MLAHGSNDYGVSLKGNKTGSSPSKASSLNWNE. Residues 15–32 are compositionally biased toward polar residues; sequence GNKTGSSPSKASSLNWNE. Residues 40-94 form a PHD-type zinc finger; it reads NTYCYCGKDRNLRFPDLQCSVCLNMFHLSCLSPPCTSMMGFSTNYQFVCKHCTED. Zn(2+)-binding residues include Cys-43, Cys-45, Cys-58, Cys-61, His-66, Cys-69, Cys-88, and Cys-91. The tract at residues 234–270 is disordered; it reads RLVETETPPPSSSKLKEDYKDSKREMKRSNTPWSNAS. A compositionally biased stretch (basic and acidic residues) spans 247–261; sequence KLKEDYKDSKREMKR. Residues 330–519 form the B30.2/SPRY domain; that stretch reads EAAKDLPNVM…KHNRYIDLPY (190 aa).

This sequence belongs to the cclA family. As to quaternary structure, component of the Set1 complex composed of ash2, sdc1, set1, shg1, spp1, swd1, swd2 and swd3. Component of the Lid2 complex composed of ash2, jmj3, lid2, sdc1 and snt2.

Its subcellular location is the nucleus. Functionally, component of the COMPASS (Set1C) complex that specifically mono-, di- and trimethylates histone H3 to form H3K4me1/2/3, which subsequently plays a role in telomere length maintenance and transcription elongation regulation. Regulates MAPK pathway and sporulation through H3K4 methylation. This Schizosaccharomyces pombe (strain 972 / ATCC 24843) (Fission yeast) protein is Set1 complex component ash2.